Consider the following 143-residue polypeptide: Transcriptional regulator MraZ (143 aa).

2 SpoVT-AbrB domains span residues 5-47 and 76-119; these read QYEH…SLDE and AVEC…SKEV.

This sequence belongs to the MraZ family. As to quaternary structure, forms oligomers.

The protein resides in the cytoplasm. The protein localises to the nucleoid. This chain is Transcriptional regulator MraZ, found in Caldanaerobacter subterraneus subsp. tengcongensis (strain DSM 15242 / JCM 11007 / NBRC 100824 / MB4) (Thermoanaerobacter tengcongensis).